Reading from the N-terminus, the 194-residue chain is dCTP deaminase (194 aa).

Residues 110–115 (RSSLAR), Asp128, 136–138 (VLE), Tyr171, Lys178, and Gln182 contribute to the dCTP site. Residue Glu138 is the Proton donor/acceptor of the active site.

The protein belongs to the dCTP deaminase family. In terms of assembly, homotrimer.

The catalysed reaction is dCTP + H2O + H(+) = dUTP + NH4(+). It participates in pyrimidine metabolism; dUMP biosynthesis; dUMP from dCTP (dUTP route): step 1/2. Catalyzes the deamination of dCTP to dUTP. This chain is dCTP deaminase, found in Pseudoalteromonas translucida (strain TAC 125).